The sequence spans 575 residues: Proline--tRNA ligase (575 aa).

This sequence belongs to the class-II aminoacyl-tRNA synthetase family. ProS type 1 subfamily. Homodimer.

Its subcellular location is the cytoplasm. The catalysed reaction is tRNA(Pro) + L-proline + ATP = L-prolyl-tRNA(Pro) + AMP + diphosphate. Its function is as follows. Catalyzes the attachment of proline to tRNA(Pro) in a two-step reaction: proline is first activated by ATP to form Pro-AMP and then transferred to the acceptor end of tRNA(Pro). As ProRS can inadvertently accommodate and process non-cognate amino acids such as alanine and cysteine, to avoid such errors it has two additional distinct editing activities against alanine. One activity is designated as 'pretransfer' editing and involves the tRNA(Pro)-independent hydrolysis of activated Ala-AMP. The other activity is designated 'posttransfer' editing and involves deacylation of mischarged Ala-tRNA(Pro). The misacylated Cys-tRNA(Pro) is not edited by ProRS. The polypeptide is Proline--tRNA ligase (Anaeromyxobacter sp. (strain Fw109-5)).